A 308-amino-acid polypeptide reads, in one-letter code: Apolipoprotein E (308 aa).

A signal peptide spans 1–18 (MKFLWAALVVTLLAGCQA). A run of 8 repeats spans residues 75-96 (LLIE…KQVG), 97-118 (PIAQ…ARLE), 119-140 (SDME…AALG), 141-162 (QNTD…KRLL), 163-184 (RDAE…EAAE), 185-206 (RGVS…LQAI), 207-224 (PPSQ…QKVR), and 225-246 (GRLE…DQME). An 8 X 22 AA approximate tandem repeats region spans residues 75–246 (LLIEETMKEV…RLDDVRDQME (172 aa)). The LDL and other lipoprotein receptors binding stretch occupies residues 153-163 (HLRKLRKRLLR). Position 157–160 (157–160 (LRKR)) interacts with heparin. The lipid-binding and lipoprotein association stretch occupies residues 205–281 (AIPPSQQLRE…SWFEPLVQDM (77 aa)). 220–227 (GQKVRGRL) provides a ligand contact to heparin. A homooligomerization region spans residues 257-308 (SQVRLQAEAFQTRLKSWFEPLVQDMQRQWASLVEKVQSSLGISPSTKPSKTK). A specificity for association with VLDL region spans residues 269 to 281 (RLKSWFEPLVQDM).

It belongs to the apolipoprotein A1/A4/E family. As to quaternary structure, homotetramer. May interact with ABCA1; functionally associated with ABCA1 in the biogenesis of HDLs. May interact with APP/A4 amyloid-beta peptide; the interaction is extremely stable in vitro but its physiological significance is unclear. May interact with MAPT. May interact with MAP2. In the cerebrospinal fluid, interacts with secreted SORL1. Interacts with PMEL; this allows the loading of PMEL luminal fragment on ILVs to induce fibril nucleation. APOE exists as multiple glycosylated and sialylated glycoforms within cells and in plasma. The extent of glycosylation and sialylation are tissue and context specific. Post-translationally, glycated in plasma VLDL. In terms of processing, phosphorylated by FAM20C in the extracellular medium.

It localises to the secreted. It is found in the extracellular space. The protein resides in the extracellular matrix. Its subcellular location is the extracellular vesicle. The protein localises to the endosome. It localises to the multivesicular body. In terms of biological role, APOE is an apolipoprotein, a protein associating with lipid particles, that mainly functions in lipoprotein-mediated lipid transport between organs via the plasma and interstitial fluids. APOE is a core component of plasma lipoproteins and is involved in their production, conversion and clearance. Apolipoproteins are amphipathic molecules that interact both with lipids of the lipoprotein particle core and the aqueous environment of the plasma. As such, APOE associates with chylomicrons, chylomicron remnants, very low density lipoproteins (VLDL) and intermediate density lipoproteins (IDL) but shows a preferential binding to high-density lipoproteins (HDL). It also binds a wide range of cellular receptors including the LDL receptor/LDLR and the very low-density lipoprotein receptor/VLDLR that mediate the cellular uptake of the APOE-containing lipoprotein particles. Finally, APOE also has a heparin-binding activity and binds heparan-sulfate proteoglycans on the surface of cells, a property that supports the capture and the receptor-mediated uptake of APOE-containing lipoproteins by cells. The protein is Apolipoprotein E (APOE) of Pteropus alecto (Black flying fox).